The sequence spans 462 residues: Microspherule protein 1 (462 aa).

Residue M1 is modified to N-acetylmethionine. The segment at 1-130 (MDKDSQGLLD…KSKQPLQVTK (130 aa)) is disordered. S22 carries the phosphoserine modification. The span at 43 to 55 (PKRRSSSRFIKRK) shows a compositional bias: basic residues. Residue S102 is modified to Phosphoserine. T103 is modified (phosphothreonine). Residues 103 to 112 (TPVPPSPAPA) are compositionally biased toward pro residues. Residue S108 is modified to Phosphoserine. Positions 113–123 (PGLTKRVKKSK) match the Nuclear localization signal motif. K123 and K130 each carry N6-acetyllysine. At S282 the chain carries Phosphoserine. The stretch at 301–335 (LEHELMVADRRQKREIRQLEQELHKWQVLVDSITG) forms a coiled coil. In terms of domain architecture, FHA spans 363–419 (ITLGRATKDNQIDVDLSLEGPAWKISRKQGVIKLKNNGDFFIANEGRRPIYIDGRPV). A UBR5-degron motif is present at residues 389 to 396 (RKQGVIKL).

As to quaternary structure, component of the chromatin remodeling INO80 complex; specifically part of a complex module associated with the N-terminus of INO80. Component of some MLL1/MLL complex, at least composed of the core components KMT2A/MLL1, ASH2L, HCFC1, WDR5 and RBBP5, as well as the facultative components BACC1, CHD8, E2F6, HSP70, INO80C, KANSL1, LAS1L, MAX, MCRS1, MGA, KAT8/MOF, PELP1, PHF20, PRP31, RING2, RUVB1/TIP49A, RUVB2/TIP49B, SENP3, TAF1, TAF4, TAF6, TAF7, TAF9 and TEX10. Component of the NSL complex at least composed of MOF/KAT8, KANSL1, KANSL2, KANSL3, MCRS1, PHF20, OGT1/OGT, WDR5 and HCFC1. Interacts with NOP2. Interacts with PINX1. Interacts with TERT. Interacts with CCDC85B. Interacts with DAXX. Interacts (via N-terminus) with FMR1 (via phosphorylated form). Interacts with FXR1 and FXR2. Interacts (via C-terminus) with NDE1 (via C-terminus); phosphorylation of NDE1 inhibits the interaction. Interacts (via C-terminus) with ZNF375. Interacts (via C-terminus) with active GTP-bound RHEB (via N-terminus) under conditions of high amino acid concentration; the interaction promotes mTORC1 complex activation by RHEB. Interacts (via N-terminus) with the mTORC1 complex; the interaction ensures mTORC1 activation by RHEB. Interacts with DYNC1I1; the interaction is required for the proper distribution of centriolar satellites. Interacts with TTBK2; the interaction is required for recruitment of TTBK2 to the mother centriole. Interacts with KIF2A; the interaction occurs during mitosis and facilitates chromosome alignment. In terms of assembly, (Microbial infection) Interacts with Herpes simplex virus ICP22. Post-translationally, ubiquitinated by UBR5 when not assembled in the INO80 complex, leading to its degradation: UBR5 recognizes and binds a degron that is not accessible when MCRS1 is part of the INO80 complex. In terms of processing, phosphorylated by AURKA on Ser-35 and/or Ser-36 during mitosis which is required for kinetochore fiber assembly and mitotic progression but not for spindle localization or for chromosome-induced microtuble aster formation. Also phosphorylated by AURKA on Ser-85 and/or Ser-87. Phosphorylated by TTK/MPS1 which enhances recruitment of KIF2A to the minus end of spindle microtubules and facilitates precise chromosome segregation. In terms of tissue distribution, detected in testis, and at lower levels in spleen, thymus, prostate, uterus, small intestine, colon and leukocytes.

It localises to the nucleus. The protein localises to the nucleolus. Its subcellular location is the cytoplasm. It is found in the cytoskeleton. The protein resides in the microtubule organizing center. It localises to the centrosome. The protein localises to the spindle pole. Its subcellular location is the chromosome. It is found in the centromere. The protein resides in the kinetochore. It localises to the lysosome. The protein localises to the centriolar satellite. In terms of biological role, modulates the transcription repressor activity of DAXX by recruiting it to the nucleolus. As part of the NSL complex, may be involved in acetylation of nucleosomal histone H4 on several lysine residues. Putative regulatory component of the chromatin remodeling INO80 complex which is involved in transcriptional regulation, DNA replication and probably DNA repair. May also be an inhibitor of TERT telomerase activity. Binds to G-quadruplex structures in mRNA. Binds to RNA homomer poly(G) and poly(U). Maintains RHEB at the lysosome in its active GTP-bound form and prevents its interaction with the mTORC1 complex inhibitor TSC2, ensuring activation of the mTORC1 complex by RHEB. Stabilizes the minus ends of kinetochore fibers by protecting them from depolymerization, ensuring functional spindle assembly during mitosis. Following phosphorylation by TTK/MPS1, enhances recruitment of KIF2A to the minus ends of mitotic spindle microtubules which promotes chromosome alignment. Regulates the morphology of microtubule minus ends in mitotic spindle by maintaining them in a closed conformation characterized by the presence of an electron-dense cap. Regulates G2/M transition and spindle assembly during oocyte meiosis. Mediates histone modifications and transcriptional regulation in germinal vesicle oocytes which are required for meiotic progression. Also regulates microtubule nucleation and spindle assembly by activating aurora kinases during oocyte meiosis. Contributes to the establishment of centriolar satellites and also plays a role in primary cilium formation by recruiting TTBK2 to the mother centriole which is necessary for removal of the CP110 cap from the mother centriole, an early step in ciliogenesis. Required for epiblast development during early embryogenesis. Essential for cell viability. The polypeptide is Microspherule protein 1 (MCRS1) (Homo sapiens (Human)).